The following is a 485-amino-acid chain: Glycogen synthase (485 aa).

Residue K17 participates in ADP-alpha-D-glucose binding.

This sequence belongs to the glycosyltransferase 1 family. Bacterial/plant glycogen synthase subfamily.

It catalyses the reaction [(1-&gt;4)-alpha-D-glucosyl](n) + ADP-alpha-D-glucose = [(1-&gt;4)-alpha-D-glucosyl](n+1) + ADP + H(+). It participates in glycan biosynthesis; glycogen biosynthesis. Synthesizes alpha-1,4-glucan chains using ADP-glucose. In Novosphingobium aromaticivorans (strain ATCC 700278 / DSM 12444 / CCUG 56034 / CIP 105152 / NBRC 16084 / F199), this protein is Glycogen synthase.